The chain runs to 192 residues: MLPPALNIPKWLEENSHLLQPPVNNYCVYHPSSPATAGYTVMIVGGPNARTDYHINTTPEFFYQYRGSMLLKTVDTSVSPPVFQDIPIHEGSIFLLPANTPHCPVRFKDTVGVVMEQPRPKDAVDTMLWFCKKCGEVVWEKRFVCTDLGTQVKEVVEEFAADQEKRTCKACGTIAETRYQEGEVVQPPRFLE.

Arg50 contributes to the O2 binding site. Fe cation-binding residues include His54, Glu60, and His102. Glu60 contacts substrate. The substrate site is built by Arg106 and Glu116. A divalent metal cation-binding residues include Cys131, Cys134, Cys168, and Cys171.

Belongs to the 3-HAO family. Fe(2+) is required as a cofactor.

The protein resides in the cytoplasm. The catalysed reaction is 3-hydroxyanthranilate + O2 = (2Z,4Z)-2-amino-3-carboxymuconate 6-semialdehyde. Its pathway is cofactor biosynthesis; NAD(+) biosynthesis; quinolinate from L-kynurenine: step 3/3. In terms of biological role, catalyzes the oxidative ring opening of 3-hydroxyanthranilate to 2-amino-3-carboxymuconate semialdehyde, which spontaneously cyclizes to quinolinate. The sequence is that of 3-hydroxyanthranilate 3,4-dioxygenase 1 (bna1-1) from Aspergillus fumigatus (strain CBS 144.89 / FGSC A1163 / CEA10) (Neosartorya fumigata).